A 267-amino-acid chain; its full sequence is MAAKIFCLIMLLGLSASAATASIFPQCSQAPIASLLPPYLSPAMSSVCENPILLPYRIQQAIAAGILPLSPLFLQQSSALLQQLPLVHLLAQNIRAQQLQQLVLANLAAYSQQQQLPLVHLLAQNIRAQQLQQLVLANLAAYSQQQQFLPFNQLAALNSAAYLQQQQLLPFSQLAAAYPRQFLPFNQLAALNSHAYVQQQQLLPFSQLAAVSPAAFLTQQHLLPFYLHTAPNVGTLLQLQQLLPFDQLALTNPAVFYQQPIIGGALF.

The first 21 residues, 1-21, serve as a signal peptide directing secretion; it reads MAAKIFCLIMLLGLSASAATA.

The protein belongs to the zein family.

Its function is as follows. Zeins are major seed storage proteins. In Zea mays (Maize), this protein is Zein-alpha Z4.